The chain runs to 275 residues: Putative acyl-[acyl-carrier-protein] desaturase DesA2 (275 aa).

Fe cation-binding residues include glutamate 107, histidine 110, glutamate 159, glutamate 189, and histidine 192.

It belongs to the fatty acid desaturase type 2 family. As to quaternary structure, homodimer. Fe(2+) is required as a cofactor.

It functions in the pathway lipid metabolism; fatty acid metabolism. Its function is as follows. May be a desaturase involved in mycobacterial fatty acid biosynthesis. The sequence is that of Putative acyl-[acyl-carrier-protein] desaturase DesA2 (desA2) from Mycobacterium tuberculosis (strain CDC 1551 / Oshkosh).